The chain runs to 503 residues: Pentatricopeptide repeat-containing protein At2g30100, chloroplastic (503 aa).

Residues 1 to 50 constitute a chloroplast transit peptide; it reads MAYAHVFASLTISTISLRRFLPRLHRNHSVKPNSRIICNLKLNYSAGKFR. 3 PPR repeats span residues 341-375, 376-410, and 411-445; these read IGVV…GREP, EADL…GSQR, and KKKT…GLHP.

It belongs to the PPR family. P subfamily.

Its subcellular location is the plastid. The protein resides in the chloroplast. In Arabidopsis thaliana (Mouse-ear cress), this protein is Pentatricopeptide repeat-containing protein At2g30100, chloroplastic.